The following is a 263-amino-acid chain: Oxidoreductase tpcG (263 aa).

It belongs to the avfA family. Specifically expressed in conidia.

It participates in secondary metabolite biosynthesis. In terms of biological role, oxidoreductase; part of the gene cluster that mediates the biosynthesis of trypacidin, a mycotoxin with antiprotozoal activity and that plays a role in the infection process. The pathway begins with the synthesis of atrochrysone thioester by the polyketide synthase (PKS) tpcC. The atrochrysone carboxyl ACP thioesterase tpcB then breaks the thioester bond and releases the atrochrysone carboxylic acid from tpcC. The decarboxylase tpcK converts atrochrysone carboxylic acid to atrochrysone which is further reduced into emodin anthrone. The next step is performed by the emodin anthrone oxygenase tpcL that catalyzes the oxidation of emodinanthrone to emodin. Emodin O-methyltransferase encoded by tpcA catalyzes methylation of the 8-hydroxy group of emodin to form questin. Ring cleavage of questin by questin oxidase tpcI leads to desmethylsulochrin via several intermediates including questin epoxide. Another methylation step catalyzed by tpcM leads to the formation of sulochrin which is further converted to monomethylsulfochrin by tpcH. Finally, the tpcJ catalyzes the conversion of monomethylsulfochrin to trypacidin. Trypacidin is toxic for human pulmonary and bronchial epithelial cells by initiating the intracellular formation of nitric oxide (NO) and hydrogen peroxide (H(2)O(2)), thus triggering host necrotic cell death. The trypacidin pathway is also able to produce endocrocin via a distinct route from the endocrocin Enc pathway. The chain is Oxidoreductase tpcG from Aspergillus fumigatus (strain ATCC MYA-4609 / CBS 101355 / FGSC A1100 / Af293) (Neosartorya fumigata).